A 504-amino-acid polypeptide reads, in one-letter code: Calcium/calmodulin-dependent protein kinase type II (504 aa).

One can recognise a Protein kinase domain in the interval 65-351 (YQLIENLGDG…IHQFFQHPWI (287 aa)). Residues 71–79 (LGDGAFSQV) and Lys94 contribute to the ATP site. Catalysis depends on Asp188, which acts as the Proton acceptor. Thr252 is subject to Phosphothreonine.

It belongs to the protein kinase superfamily. CAMK Ser/Thr protein kinase family. CaMK subfamily. In terms of assembly, interacts with sty1. Requires Mg(2+) as cofactor. Autophosphorylated.

The protein resides in the cytoplasm. It is found in the barrier septum. The protein localises to the forespore membrane. Its subcellular location is the ascus epiplasm. The catalysed reaction is L-seryl-[protein] + ATP = O-phospho-L-seryl-[protein] + ADP + H(+). It carries out the reaction L-threonyl-[protein] + ATP = O-phospho-L-threonyl-[protein] + ADP + H(+). Functionally, has a role in the regulation of G2/M transition during the mitotic cell cycle. This is Calcium/calmodulin-dependent protein kinase type II from Schizosaccharomyces pombe (strain 972 / ATCC 24843) (Fission yeast).